We begin with the raw amino-acid sequence, 529 residues long: UDP-glucuronosyltransferase 2B23 (529 aa).

A signal peptide spans 1–24; the sequence is MSVKWTSVILLIQLSFYFSSGSCG. N-linked (GlcNAc...) asparagine glycans are attached at residues N67 and N68. The helical transmembrane segment at 494–514 threads the bilayer; that stretch reads IGFLLACVATVIFIIMKCCLF.

Belongs to the UDP-glycosyltransferase family. Expressed in several tissues, including the prostate, mammary gland, epididymis, testis and ovary.

The protein resides in the microsome membrane. It localises to the endoplasmic reticulum membrane. It catalyses the reaction glucuronate acceptor + UDP-alpha-D-glucuronate = acceptor beta-D-glucuronoside + UDP + H(+). In terms of biological role, UDPGTs are of major importance in the conjugation and subsequent elimination of potentially toxic xenobiotics and endogenous compounds. This isozyme has glucuronidating capacity on 6 steroids and the bile acid, hyodeoxycholic acid. May potentially play an important role in estrogen and androgen catabolism in peripheral steroid target tissues. The polypeptide is UDP-glucuronosyltransferase 2B23 (UGT2B23) (Macaca fascicularis (Crab-eating macaque)).